A 502-amino-acid chain; its full sequence is ATP synthase subunit alpha (502 aa).

169 to 176 (GDRQTGKT) provides a ligand contact to ATP.

The protein belongs to the ATPase alpha/beta chains family. F-type ATPases have 2 components, CF(1) - the catalytic core - and CF(0) - the membrane proton channel. CF(1) has five subunits: alpha(3), beta(3), gamma(1), delta(1), epsilon(1). CF(0) has three main subunits: a(1), b(2) and c(9-12). The alpha and beta chains form an alternating ring which encloses part of the gamma chain. CF(1) is attached to CF(0) by a central stalk formed by the gamma and epsilon chains, while a peripheral stalk is formed by the delta and b chains.

It localises to the cell membrane. The enzyme catalyses ATP + H2O + 4 H(+)(in) = ADP + phosphate + 5 H(+)(out). In terms of biological role, produces ATP from ADP in the presence of a proton gradient across the membrane. The alpha chain is a regulatory subunit. This Desulfitobacterium hafniense (strain DSM 10664 / DCB-2) protein is ATP synthase subunit alpha.